Here is a 35-residue protein sequence, read N- to C-terminus: Photosystem II reaction center protein T (35 aa).

Residues 3–23 (ALVYTFLLVSTLGIIFFAIFF) form a helical membrane-spanning segment.

The protein belongs to the PsbT family. PSII is composed of 1 copy each of membrane proteins PsbA, PsbB, PsbC, PsbD, PsbE, PsbF, PsbH, PsbI, PsbJ, PsbK, PsbL, PsbM, PsbT, PsbY, PsbZ, Psb30/Ycf12, at least 3 peripheral proteins of the oxygen-evolving complex and a large number of cofactors. It forms dimeric complexes.

The protein localises to the plastid. It is found in the chloroplast thylakoid membrane. In terms of biological role, found at the monomer-monomer interface of the photosystem II (PS II) dimer, plays a role in assembly and dimerization of PSII. PSII is a light-driven water plastoquinone oxidoreductase, using light energy to abstract electrons from H(2)O, generating a proton gradient subsequently used for ATP formation. The sequence is that of Photosystem II reaction center protein T from Drimys granadensis.